The sequence spans 873 residues: DNA mismatch repair protein PMS1 (873 aa).

The tract at residues 1 to 357 is DNA- and ATP-binding; that stretch reads MTQIHQINDI…FKTTLSDYYN (357 aa). A compositionally biased stretch (basic and acidic residues) spans 379–402; sequence LKTEVFDDRSTTHESDNENYHTAR. Residues 379–423 form a disordered region; the sequence is LKTEVFDDRSTTHESDNENYHTARSESNQSNHAHFNSTTGVIDKS. Position 393 is a phosphoserine (serine 393). A compositionally biased stretch (polar residues) spans 403 to 423; that stretch reads SESNQSNHAHFNSTTGVIDKS. The residue at position 566 (serine 566) is a Phosphoserine. The segment at 661–873 is interaction with MLH1; it reads YLTLTVSKND…WSSFSKDYEI (213 aa).

This sequence belongs to the DNA mismatch repair MutL/HexB family. Heterodimer of MLH1 and PMS1, called MutLalpha, which is the major MMR MutL activity correcting base-base mismatches as well as IDLs. The heterodimer binds double strand DNA independently of a mismatch with positive cooperativity and has more than one DNA binding site. Forms a ternary complex with either the MSH2-MSH6 (MutSalpha) or the MSH2-MSH3 heterodimer (MutSbeta), which recognize and bind to mismatch DNA. Ternary complex formation is promoted by ATP binding.

It localises to the nucleus. Required for DNA mismatch repair (MMR), correcting base-base mismatches and insertion-deletion loops (IDLs) resulting from DNA replication, DNA damage or from recombination events between non-identical sequences during meiosis. Component of the MutLalpha heterodimer that forms a ternary complex with the MutS heterodimers, which initially recognize the DNA mismatches. This complex is thought to be responsible for directing the downstream MMR events, including strand discrimination, excision, and resynthesis. Plays a major role in maintaining the genetic stability of simple sequence repeats and in the repair of heteroduplex sites present in meiotic recombination intermediates. The protein is DNA mismatch repair protein PMS1 (PMS1) of Saccharomyces cerevisiae (strain ATCC 204508 / S288c) (Baker's yeast).